Here is a 201-residue protein sequence, read N- to C-terminus: 3-isopropylmalate dehydratase small subunit (201 aa).

It belongs to the LeuD family. LeuD type 1 subfamily. As to quaternary structure, heterodimer of LeuC and LeuD.

It catalyses the reaction (2R,3S)-3-isopropylmalate = (2S)-2-isopropylmalate. The protein operates within amino-acid biosynthesis; L-leucine biosynthesis; L-leucine from 3-methyl-2-oxobutanoate: step 2/4. Catalyzes the isomerization between 2-isopropylmalate and 3-isopropylmalate, via the formation of 2-isopropylmaleate. This Shewanella pealeana (strain ATCC 700345 / ANG-SQ1) protein is 3-isopropylmalate dehydratase small subunit.